The primary structure comprises 584 residues: 2-succinyl-5-enolpyruvyl-6-hydroxy-3-cyclohexene-1-carboxylate synthase (584 aa).

The protein belongs to the TPP enzyme family. MenD subfamily. As to quaternary structure, homodimer. The cofactor is Mg(2+). Requires Mn(2+) as cofactor. Thiamine diphosphate serves as cofactor.

It carries out the reaction isochorismate + 2-oxoglutarate + H(+) = 5-enolpyruvoyl-6-hydroxy-2-succinyl-cyclohex-3-ene-1-carboxylate + CO2. It functions in the pathway quinol/quinone metabolism; 1,4-dihydroxy-2-naphthoate biosynthesis; 1,4-dihydroxy-2-naphthoate from chorismate: step 2/7. Its pathway is quinol/quinone metabolism; menaquinone biosynthesis. Catalyzes the thiamine diphosphate-dependent decarboxylation of 2-oxoglutarate and the subsequent addition of the resulting succinic semialdehyde-thiamine pyrophosphate anion to isochorismate to yield 2-succinyl-5-enolpyruvyl-6-hydroxy-3-cyclohexene-1-carboxylate (SEPHCHC). The sequence is that of 2-succinyl-5-enolpyruvyl-6-hydroxy-3-cyclohexene-1-carboxylate synthase from Bacillus cereus (strain ZK / E33L).